Here is a 565-residue protein sequence, read N- to C-terminus: Probable serine/threonine-protein kinase abkA (565 aa).

Positions 44–77 (NNNNISLKDKFKDLKDLKDNLNEKKINNDNDDDD) form a coiled coil. Residues 231–565 (LFQDDPIAAA…FKNIFYKNYK (335 aa)) form the Protein kinase domain. Residues 237–245 (IAAASIGQV) and Lys-259 contribute to the ATP site. The active-site Proton acceptor is Asp-401.

The protein belongs to the protein kinase superfamily. ADCK protein kinase family.

This is Probable serine/threonine-protein kinase abkA (abkA) from Dictyostelium discoideum (Social amoeba).